The primary structure comprises 277 residues: Urease accessory protein UreD (277 aa).

The protein belongs to the UreD family. In terms of assembly, ureD, UreF and UreG form a complex that acts as a GTP-hydrolysis-dependent molecular chaperone, activating the urease apoprotein by helping to assemble the nickel containing metallocenter of UreC. The UreE protein probably delivers the nickel.

It localises to the cytoplasm. In terms of biological role, required for maturation of urease via the functional incorporation of the urease nickel metallocenter. This chain is Urease accessory protein UreD, found in Flavobacterium johnsoniae (strain ATCC 17061 / DSM 2064 / JCM 8514 / BCRC 14874 / CCUG 350202 / NBRC 14942 / NCIMB 11054 / UW101) (Cytophaga johnsonae).